The primary structure comprises 492 residues: Cysteine--tRNA ligase (492 aa).

Residue cysteine 29 participates in Zn(2+) binding. Residues 31–41 carry the 'HIGH' region motif; it reads LTTSDPPHLGH. Residues cysteine 229, histidine 254, and glutamate 258 each coordinate Zn(2+). Positions 286–290 match the 'KMSKS' region motif; that stretch reads KMSSS.

The protein belongs to the class-I aminoacyl-tRNA synthetase family. The cofactor is Zn(2+).

The protein resides in the cytoplasm. The enzyme catalyses tRNA(Cys) + L-cysteine + ATP = L-cysteinyl-tRNA(Cys) + AMP + diphosphate. This Haloarcula marismortui (strain ATCC 43049 / DSM 3752 / JCM 8966 / VKM B-1809) (Halobacterium marismortui) protein is Cysteine--tRNA ligase.